A 205-amino-acid polypeptide reads, in one-letter code: Ribonuclease HII (205 aa).

One can recognise an RNase H type-2 domain in the interval 1–203 (MKAGIDEAGK…VSNLRQKTLD (203 aa)). A divalent metal cation is bound by residues D6 and E7. Position 46 (R46) interacts with substrate. D101 contacts a divalent metal cation. 3 residues coordinate substrate: K143, R146, and Y164.

The protein belongs to the RNase HII family. It depends on Mn(2+) as a cofactor. Mg(2+) serves as cofactor.

The protein resides in the cytoplasm. The catalysed reaction is Endonucleolytic cleavage to 5'-phosphomonoester.. Endonuclease that specifically degrades the RNA of RNA-DNA hybrids. The chain is Ribonuclease HII (rnhB) from Archaeoglobus fulgidus (strain ATCC 49558 / DSM 4304 / JCM 9628 / NBRC 100126 / VC-16).